The following is a 173-amino-acid chain: Soluble secreted antigen MPT53 (173 aa).

A signal peptide spans 1–38 (MSLRLVSPIKAFADGIVAVAIAVVLMFGLANTPRAVAA). Residues Cys-73 and Cys-76 are joined by a disulfide bond.

Belongs to the thioredoxin family.

The protein resides in the secreted. In terms of biological role, disulfide oxidoreductase that catalyzes the oxidation of reduced, unfolded secreted proteins to form disulfide bonds. Despite a weak homology to thioredoxin this cannot serve as a substrate for thioredoxin reductase. This is Soluble secreted antigen MPT53 (mpt53) from Mycobacterium bovis (strain ATCC BAA-935 / AF2122/97).